Consider the following 528-residue polypeptide: Tyrosine 3-monooxygenase (528 aa).

Ser19 is subject to Phosphoserine; by CaMK2. Positions 33–65 (GQGAPGPSLTGSPWPGTAAPAASYTPTPRSPRF) are disordered. The span at 47-59 (PGTAAPAASYTPT) shows a compositional bias: low complexity. At Ser62 the chain carries Phosphoserine. Ser71 bears the Phosphoserine; by CaMK2 and PKA mark. His361, His366, and Glu406 together coordinate Fe cation. Ser502 bears the Phosphoserine mark.

This sequence belongs to the biopterin-dependent aromatic amino acid hydroxylase family. As to quaternary structure, homotetramer. Interacts (when phosphorylated at Ser-19) with YWHAG; one YWHAG dimer binds to one TH tetramer and this interaction may influence the phosphorylation and dephosphorylation of other sites. Interacts with NT5DC2; the interaction results in reduced phosphorylation and decreased catalytic activity of TH. Requires Fe(2+) as cofactor. In terms of processing, phosphorylated on Ser-19, Ser-62 and Ser-71 by several protein kinases with different site specificities. Phosphorylation at Ser-62 and Ser-71 leads to an increase of TH activity. Phosphorylation at Ser-71 activates the enzyme and also counteracts the feedback inhibition of TH by catecholamines. Phosphorylation of Ser-19 and Ser-62 triggers the proteasomal degradation of TH through the ubiquitin-proteasome pathway. Phosphorylation at Ser-62 facilitates transport of TH from the soma to the nerve terminals via the microtubule network. Phosphorylation at Ser-19 induces the high-affinity binding to the 14-3-3 protein YWHAG; this interaction may influence the phosphorylation and dephosphorylation of other sites. Ser-19 increases the phosphorylation at Ser-71 in a hierarchical manner, leading to increased activity. As to expression, mainly expressed in the brain and adrenal glands.

It localises to the cytoplasm. The protein localises to the perinuclear region. The protein resides in the nucleus. It is found in the cell projection. Its subcellular location is the axon. It localises to the cytoplasmic vesicle. The protein localises to the secretory vesicle. The protein resides in the synaptic vesicle. The enzyme catalyses (6R)-L-erythro-5,6,7,8-tetrahydrobiopterin + L-tyrosine + O2 = (4aS,6R)-4a-hydroxy-L-erythro-5,6,7,8-tetrahydrobiopterin + L-dopa. Its pathway is catecholamine biosynthesis; dopamine biosynthesis; dopamine from L-tyrosine: step 1/2. Its activity is regulated as follows. Inhibited in feedback fashion by the catecholamine neurotransmitters, especially by dopamine in competition with tetrahydrobiopterin. Phosphorylation of several Ser/Thr residues in the N-terminus regulates the catalytic activity. Ser-62 and Ser-71 are readily phosphorylated to activate the catalytic activity. A Cysteine modification induced by N-ethylmaleimide (NEM), inhibits tyrosine 3-monooxygenase activity through the modification of the Cys-207. Functionally, catalyzes the conversion of L-tyrosine to L-dihydroxyphenylalanine (L-Dopa), the rate-limiting step in the biosynthesis of catecholamines, dopamine, noradrenaline, and adrenaline. Uses tetrahydrobiopterin and molecular oxygen to convert tyrosine to L-Dopa. In addition to tyrosine, is able to catalyze the hydroxylation of phenylalanine and tryptophan with lower specificity. Positively regulates the regression of retinal hyaloid vessels during postnatal development. Its function is as follows. Lacks catalytic activity. This chain is Tyrosine 3-monooxygenase, found in Homo sapiens (Human).